Consider the following 416-residue polypeptide: MAYFLEQTDSEIFELIFEEYKRQNEHLEMIASENYTFASVMEAMGSVLTNKYAEGYPNKRYYGGCEVVDKIESLAIERAKKLFNCQFANVQAHSGSQANNAVYHALLKPYDKILGMDLSCGGHLTHGAKVSLTGKHYQSFSYGVNLDGYIDYEEALKIAQSVKPEIIVCGFSAYPREIDFKKFREIADEVGALLLGDIAHVAGLVVTGEHAHPFPHCHVVSSTTHKTLRGPRGGIILTNDEEIAAKIDKAIFPGTQGGPLMHVIAAKAVGFKENLKPEFKAYAQLVKSNMQVLAKALKEKNHKLVSGGTSNHLLLMDFLDKPYSGKDADIALGNAGITVNKNTIPGETRSPFVTSGIRIGSAALSARGMGAKEFEIIGNKISDILNDINNVSLQLHVKEELKAMVNQFPVYHQPIF.

(6S)-5,6,7,8-tetrahydrofolate-binding positions include Leu-118 and 122–124 (GHL). Lys-226 is subject to N6-(pyridoxal phosphate)lysine. (6S)-5,6,7,8-tetrahydrofolate contacts are provided by residues Glu-242 and 350–352 (SPF).

The protein belongs to the SHMT family. In terms of assembly, homodimer. The cofactor is pyridoxal 5'-phosphate.

The protein resides in the cytoplasm. The catalysed reaction is (6R)-5,10-methylene-5,6,7,8-tetrahydrofolate + glycine + H2O = (6S)-5,6,7,8-tetrahydrofolate + L-serine. It participates in one-carbon metabolism; tetrahydrofolate interconversion. It functions in the pathway amino-acid biosynthesis; glycine biosynthesis; glycine from L-serine: step 1/1. Functionally, catalyzes the reversible interconversion of serine and glycine with tetrahydrofolate (THF) serving as the one-carbon carrier. This reaction serves as the major source of one-carbon groups required for the biosynthesis of purines, thymidylate, methionine, and other important biomolecules. Also exhibits THF-independent aldolase activity toward beta-hydroxyamino acids, producing glycine and aldehydes, via a retro-aldol mechanism. The polypeptide is Serine hydroxymethyltransferase (Helicobacter pylori (strain ATCC 700392 / 26695) (Campylobacter pylori)).